A 354-amino-acid polypeptide reads, in one-letter code: MSRRQRGVALLIVMLMLSLMVTIAASITERSGKAWQRTSNLLNRTQARWYALGAEALISNVLQRDAQASPESTFIGQPWSKVDHQMMADGTEIRAQALDGQACLNLNALSPARNVTPNNASGNNTSGNNNAANGSSGNGNSPQPPKVGTSEQVPYAAQVFRQLMIVLGEDPKQAERITDALRDWLDEDSEPLMNGAEDDSYVNFHPGNQRMTDVTELRAVMGMDAALYRRLLPYVCVLPVDKLAINVNTLMPGSAPLLSALFMGDISLDMAERILQQRPPQGWRNLNDFMGMSALPESGKNGARQVLVIKSDWFFADIQIRVDDSEFYQRSLFHRGKQIEVVQRQYGGYRTVNP.

The propeptide at 1–7 (MSRRQRG) is leader sequence. A helical transmembrane segment spans residues 8–28 (VALLIVMLMLSLMVTIAASIT). The Periplasmic portion of the chain corresponds to 29–354 (ERSGKAWQRT…QYGGYRTVNP (326 aa)). Residues 114-151 (NVTPNNASGNNTSGNNNAANGSSGNGNSPQPPKVGTSE) are disordered. The span at 118 to 141 (NNASGNNTSGNNNAANGSSGNGNS) shows a compositional bias: low complexity.

It belongs to the GSP K family. In terms of assembly, type II secretion is composed of four main components: the outer membrane complex, the inner membrane complex, the cytoplasmic secretion ATPase and the periplasm-spanning pseudopilus. Interacts with core component OutG. In terms of processing, cleaved by prepilin peptidase.

The protein localises to the cell inner membrane. Component of the type II secretion system required for the energy-dependent secretion of extracellular factors such as proteases and toxins from the periplasm. Plays a role in pseudopilus assembly and seems to control its length. Interacts with the pseudopilus tip complex that is critical for the recognition and binding of secretion substrates. In Dickeya chrysanthemi (Pectobacterium chrysanthemi), this protein is Type II secretion system protein K (outK).